We begin with the raw amino-acid sequence, 406 residues long: Serine hydroxymethyltransferase (406 aa).

(6S)-5,6,7,8-tetrahydrofolate contacts are provided by residues Leu111 and 115–117; that span reads GHL. Lys220 carries the N6-(pyridoxal phosphate)lysine modification. 340-342 provides a ligand contact to (6S)-5,6,7,8-tetrahydrofolate; that stretch reads SAF.

Belongs to the SHMT family. As to quaternary structure, homodimer. The cofactor is pyridoxal 5'-phosphate.

It localises to the cytoplasm. The catalysed reaction is (6R)-5,10-methylene-5,6,7,8-tetrahydrofolate + glycine + H2O = (6S)-5,6,7,8-tetrahydrofolate + L-serine. It functions in the pathway one-carbon metabolism; tetrahydrofolate interconversion. It participates in amino-acid biosynthesis; glycine biosynthesis; glycine from L-serine: step 1/1. In terms of biological role, catalyzes the reversible interconversion of serine and glycine with tetrahydrofolate (THF) serving as the one-carbon carrier. This reaction serves as the major source of one-carbon groups required for the biosynthesis of purines, thymidylate, methionine, and other important biomolecules. Also exhibits THF-independent aldolase activity toward beta-hydroxyamino acids, producing glycine and aldehydes, via a retro-aldol mechanism. The chain is Serine hydroxymethyltransferase from Mycoplasma genitalium (strain ATCC 33530 / DSM 19775 / NCTC 10195 / G37) (Mycoplasmoides genitalium).